The chain runs to 280 residues: MGISLENVSYTYQSGTPFERRALFDMTVTIKDGSYTAFIGHTGSGKSTIMQLLNGLYLPTSGQVKVDDTIINSQSKNKEIKPIRKKVGLVFQFPESQLFAETVLEDIAFGPQNFGVSKEEAEQRALESLRLVGLSDELRDQNPFDLSGGQMRRVAIAGILAMQPDILVLDEPTAGLDPQGRKELMSLFKQLHLSGITIVLVTHLMDDVADYATAVNVMEKGRLVLSGTPKDVFQKVAFLKEKQLGVPKITEFALQLQEKGYSFESLPITIEEFVEVLVHG.

The ABC transporter domain maps to 3-245 (ISLENVSYTY…VAFLKEKQLG (243 aa)). Position 40–47 (40–47 (GHTGSGKS)) interacts with ATP.

This sequence belongs to the ABC transporter superfamily. Energy-coupling factor EcfA family. As to quaternary structure, forms a stable energy-coupling factor (ECF) transporter complex composed of 2 membrane-embedded substrate-binding proteins (S component), 2 ATP-binding proteins (A component) and 2 transmembrane proteins (T component).

The protein localises to the cell membrane. Its function is as follows. ATP-binding (A) component of a common energy-coupling factor (ECF) ABC-transporter complex. Unlike classic ABC transporters this ECF transporter provides the energy necessary to transport a number of different substrates. This Streptococcus thermophilus (strain CNRZ 1066) protein is Energy-coupling factor transporter ATP-binding protein EcfA2.